The chain runs to 84 residues: UPF0473 protein CPF_2030 (84 aa).

It belongs to the UPF0473 family.

The protein is UPF0473 protein CPF_2030 of Clostridium perfringens (strain ATCC 13124 / DSM 756 / JCM 1290 / NCIMB 6125 / NCTC 8237 / Type A).